The chain runs to 140 residues: Large ribosomal subunit protein uL11 (140 aa).

It belongs to the universal ribosomal protein uL11 family. Part of the ribosomal stalk of the 50S ribosomal subunit. Interacts with L10 and the large rRNA to form the base of the stalk. L10 forms an elongated spine to which L12 dimers bind in a sequential fashion forming a multimeric L10(L12)X complex. Post-translationally, one or more lysine residues are methylated.

Its function is as follows. Forms part of the ribosomal stalk which helps the ribosome interact with GTP-bound translation factors. This Desulfovibrio desulfuricans (strain ATCC 27774 / DSM 6949 / MB) protein is Large ribosomal subunit protein uL11.